Here is a 474-residue protein sequence, read N- to C-terminus: Bifunctional protein HldE (474 aa).

Residues 1–318 are ribokinase; the sequence is MKLSMPRFDQ…RAIQREEGSE (318 aa). 194–197 serves as a coordination point for ATP; it reads NLSE. Aspartate 263 is an active-site residue. Positions 343-474 are cytidylyltransferase; sequence FTNGCFDILH…AIVEKIRGQG (132 aa).

This sequence in the N-terminal section; belongs to the carbohydrate kinase PfkB family. The protein in the C-terminal section; belongs to the cytidylyltransferase family. As to quaternary structure, homodimer.

The catalysed reaction is D-glycero-beta-D-manno-heptose 7-phosphate + ATP = D-glycero-beta-D-manno-heptose 1,7-bisphosphate + ADP + H(+). The enzyme catalyses D-glycero-beta-D-manno-heptose 1-phosphate + ATP + H(+) = ADP-D-glycero-beta-D-manno-heptose + diphosphate. It functions in the pathway nucleotide-sugar biosynthesis; ADP-L-glycero-beta-D-manno-heptose biosynthesis; ADP-L-glycero-beta-D-manno-heptose from D-glycero-beta-D-manno-heptose 7-phosphate: step 1/4. It participates in nucleotide-sugar biosynthesis; ADP-L-glycero-beta-D-manno-heptose biosynthesis; ADP-L-glycero-beta-D-manno-heptose from D-glycero-beta-D-manno-heptose 7-phosphate: step 3/4. In terms of biological role, catalyzes the phosphorylation of D-glycero-D-manno-heptose 7-phosphate at the C-1 position to selectively form D-glycero-beta-D-manno-heptose-1,7-bisphosphate. Functionally, catalyzes the ADP transfer from ATP to D-glycero-beta-D-manno-heptose 1-phosphate, yielding ADP-D-glycero-beta-D-manno-heptose. The protein is Bifunctional protein HldE of Pseudomonas savastanoi pv. phaseolicola (strain 1448A / Race 6) (Pseudomonas syringae pv. phaseolicola (strain 1448A / Race 6)).